The sequence spans 94 residues: Putative pterin-4-alpha-carbinolamine dehydratase (94 aa).

It belongs to the pterin-4-alpha-carbinolamine dehydratase family.

The catalysed reaction is (4aS,6R)-4a-hydroxy-L-erythro-5,6,7,8-tetrahydrobiopterin = (6R)-L-erythro-6,7-dihydrobiopterin + H2O. This Mycobacterium sp. (strain JLS) protein is Putative pterin-4-alpha-carbinolamine dehydratase.